The following is a 504-amino-acid chain: ATP synthase subunit alpha (504 aa).

171–178 (GDRQTGKT) is a binding site for ATP.

This sequence belongs to the ATPase alpha/beta chains family. F-type ATPases have 2 components, CF(1) - the catalytic core - and CF(0) - the membrane proton channel. CF(1) has five subunits: alpha(3), beta(3), gamma(1), delta(1), epsilon(1). CF(0) has three main subunits: a(1), b(2) and c(9-12). The alpha and beta chains form an alternating ring which encloses part of the gamma chain. CF(1) is attached to CF(0) by a central stalk formed by the gamma and epsilon chains, while a peripheral stalk is formed by the delta and b chains.

The protein localises to the cell inner membrane. The enzyme catalyses ATP + H2O + 4 H(+)(in) = ADP + phosphate + 5 H(+)(out). Its function is as follows. Produces ATP from ADP in the presence of a proton gradient across the membrane. The alpha chain is a regulatory subunit. In Sulfurovum sp. (strain NBC37-1), this protein is ATP synthase subunit alpha.